The sequence spans 660 residues: DNA mismatch repair protein MutL (660 aa).

This sequence belongs to the DNA mismatch repair MutL/HexB family.

In terms of biological role, this protein is involved in the repair of mismatches in DNA. It is required for dam-dependent methyl-directed DNA mismatch repair. May act as a 'molecular matchmaker', a protein that promotes the formation of a stable complex between two or more DNA-binding proteins in an ATP-dependent manner without itself being part of a final effector complex. In Streptococcus pyogenes serotype M12 (strain MGAS2096), this protein is DNA mismatch repair protein MutL.